A 1164-amino-acid chain; its full sequence is IgA FC receptor (1164 aa).

A signal peptide spans 1–37 (MFKSNYERKMRYSIRKFSVGVASVAVASLFMGSVAHA). Disordered regions lie at residues 54–75 (KPYPSMAQTDQGNNSSSSELET) and 167–220 (HEEV…EDKD). Positions 59–73 (MAQTDQGNNSSSSEL) are enriched in polar residues. Basic and acidic residues-rich tracts occupy residues 167–176 (HEEVEKDKKA) and 183–220 (KQSDTKVDLSNIDKELNHQKSQVEKMAEQKGITNEDKD). 2 igA-binding regions span residues 199 to 438 (NHQK…KIEL) and 439 to 826 (TVSP…ETNT). The Ig-like domain maps to 434 to 534 (QKIELTVSPE…VEKTFTITVQ (101 aa)). A compositionally biased stretch (basic and acidic residues) spans 536-564 (KEEKQVPKTPEQKDSKTEEKVPQEPKSND). Disordered stretches follow at residues 536 to 567 (KEEKQVPKTPEQKDSKTEEKVPQEPKSNDKNQ) and 823 to 947 (ETNT…PDGL). Pro residues predominate over residues 911 to 920 (PKIPEPPKTP). Residues 1132-1136 (LPYTG) carry the LPXTG sorting signal motif. Threonine 1135 carries the post-translational modification Pentaglycyl murein peptidoglycan amidated threonine. Residues 1136-1164 (GVASNLVLEIMGLLGLIGTSFIAMKRRKS) constitute a propeptide, removed by sortase.

It is found in the secreted. It localises to the cell wall. In Streptococcus agalactiae, this protein is IgA FC receptor (bag).